Here is a 133-residue protein sequence, read N- to C-terminus: MYAENYKRFEELIDKLREFEGAIIVEGPRDEVALRNLGVRAEIIRLSRLPLSEIALIASSYGEVMILTDFDRKGEELARKLLRYLEGYPCRVDSETRKELKRIAKKDIKGIEDLYGLYLKVISVSDPHLEGIR.

Positions 20-100 (EGAIIVEGPR…RVDSETRKEL (81 aa)) constitute a Toprim domain. Residues E26, D69, and D71 each coordinate Mg(2+).

The protein belongs to the UPF0292 family. Mg(2+) serves as cofactor.

The sequence is that of UPF0292 protein TON_0187 from Thermococcus onnurineus (strain NA1).